Reading from the N-terminus, the 470-residue chain is 3-oxo-isoapionate kinase (470 aa).

2 residues coordinate substrate: aspartate 30 and arginine 78. ATP contacts are provided by residues serine 291, 403–406, and glycine 451; that span reads GGDS.

The protein belongs to the four-carbon acid sugar kinase family.

It catalyses the reaction 3-oxoisoapionate + ATP = 3-oxoisoapionate 4-phosphate + ADP + H(+). It participates in carbohydrate metabolism. Involved in catabolism of D-apiose. Catalyzes the phosphorylation of 3-oxo-isoapionate to 3-oxo-isoapionate 4-phosphate. This chain is 3-oxo-isoapionate kinase, found in Paraburkholderia graminis (strain ATCC 700544 / DSM 17151 / LMG 18924 / NCIMB 13744 / C4D1M).